Reading from the N-terminus, the 493-residue chain is Succinate-semialdehyde dehydrogenase [NADP(+)] 2 (493 aa).

NAD(+) is bound at residue 242-247 (GSTNVG). Residue Glu264 is part of the active site. Catalysis depends on Cys298, which acts as the Nucleophile.

Belongs to the aldehyde dehydrogenase family. Homotetramer.

It is found in the cytoplasm. It carries out the reaction succinate semialdehyde + NAD(+) + H2O = succinate + NADH + 2 H(+). It catalyses the reaction succinate semialdehyde + NADP(+) + H2O = succinate + NADPH + 2 H(+). The protein operates within amino-acid degradation; 4-aminobutanoate degradation. Its function is as follows. Catalyzes the oxidation of succinate semialdehyde to succinate. Can utilize both NAD(+) or NADP(+) as a coenzyme. Functions in the GABA shunt, which allows to bypass 2 reactions in the TCA cycle by removing alpha-ketoglutarate from the cycle and feeding succinate and NADH back into the cycle. The chain is Succinate-semialdehyde dehydrogenase [NADP(+)] 2 (ssd2) from Schizosaccharomyces pombe (strain 972 / ATCC 24843) (Fission yeast).